The primary structure comprises 245 residues: 1-(5-phosphoribosyl)-5-[(5-phosphoribosylamino)methylideneamino] imidazole-4-carboxamide isomerase (245 aa).

Asp-7 serves as the catalytic Proton acceptor. Asp-129 acts as the Proton donor in catalysis.

Belongs to the HisA/HisF family.

Its subcellular location is the cytoplasm. It carries out the reaction 1-(5-phospho-beta-D-ribosyl)-5-[(5-phospho-beta-D-ribosylamino)methylideneamino]imidazole-4-carboxamide = 5-[(5-phospho-1-deoxy-D-ribulos-1-ylimino)methylamino]-1-(5-phospho-beta-D-ribosyl)imidazole-4-carboxamide. It functions in the pathway amino-acid biosynthesis; L-histidine biosynthesis; L-histidine from 5-phospho-alpha-D-ribose 1-diphosphate: step 4/9. The chain is 1-(5-phosphoribosyl)-5-[(5-phosphoribosylamino)methylideneamino] imidazole-4-carboxamide isomerase from Escherichia coli O127:H6 (strain E2348/69 / EPEC).